A 471-amino-acid chain; its full sequence is Glutamate--tRNA ligase (471 aa).

The 'HIGH' region motif lies at proline 9–glycine 19. Residues cysteine 98, cysteine 100, cysteine 125, and histidine 127 each coordinate Zn(2+). Residues lysine 237–arginine 241 carry the 'KMSKS' region motif. Lysine 240 provides a ligand contact to ATP.

Belongs to the class-I aminoacyl-tRNA synthetase family. Glutamate--tRNA ligase type 1 subfamily. Monomer. Zn(2+) is required as a cofactor.

It is found in the cytoplasm. It carries out the reaction tRNA(Glu) + L-glutamate + ATP = L-glutamyl-tRNA(Glu) + AMP + diphosphate. Functionally, catalyzes the attachment of glutamate to tRNA(Glu) in a two-step reaction: glutamate is first activated by ATP to form Glu-AMP and then transferred to the acceptor end of tRNA(Glu). The polypeptide is Glutamate--tRNA ligase (Shigella dysenteriae serotype 1 (strain Sd197)).